A 320-amino-acid polypeptide reads, in one-letter code: Beta-ketoacyl-[acyl-carrier-protein] synthase III (320 aa).

Active-site residues include cysteine 112 and histidine 245. The segment at 246–250 (QANIR) is ACP-binding. The active site involves asparagine 275.

Belongs to the thiolase-like superfamily. FabH family. As to quaternary structure, homodimer.

It is found in the cytoplasm. The catalysed reaction is malonyl-[ACP] + acetyl-CoA + H(+) = 3-oxobutanoyl-[ACP] + CO2 + CoA. The protein operates within lipid metabolism; fatty acid biosynthesis. In terms of biological role, catalyzes the condensation reaction of fatty acid synthesis by the addition to an acyl acceptor of two carbons from malonyl-ACP. Catalyzes the first condensation reaction which initiates fatty acid synthesis and may therefore play a role in governing the total rate of fatty acid production. Possesses both acetoacetyl-ACP synthase and acetyl transacylase activities. Its substrate specificity determines the biosynthesis of branched-chain and/or straight-chain of fatty acids. This is Beta-ketoacyl-[acyl-carrier-protein] synthase III from Streptococcus thermophilus (strain ATCC BAA-250 / LMG 18311).